We begin with the raw amino-acid sequence, 501 residues long: Serine/threonine protein phosphatase 2A 55 kDa regulatory subunit B beta isoform (501 aa).

M1 carries the post-translational modification N-acetylmethionine. 5 WD repeats span residues 34–73 (QEVDIISAIEFDKSGDHLATGDRGGRVVLFERTDTKDHGG), 110–151 (EIEE…IKKI), 220–258 (AHDYHINSISNSSDGETFISADDLRVNLWNLEISNQSFN), 269–309 (DLTE…LCDS), and 328–366 (EIIASISDIKFSKDGRYILSRDYMTLKLWDINMDSGPVA). Positions 439–449 (TPARPSRSIGS) are enriched in polar residues. The segment at 439 to 466 (TPARPSRSIGSMTRVVRRGSESPGTEAN) is disordered. The WD 6 repeat unit spans residues 471–501 (DFTTKLLHMAWHPTENSIACAAANSLYMYYA).

This sequence belongs to the phosphatase 2A regulatory subunit B family. As to quaternary structure, PP2A consists of a common heteromeric enzyme, composed of a catalytic subunit (subunits C), a constant regulatory subunit (subunit A), and a variety of regulatory subunits such as subunits B (the R2/B/PR55/B55, R3/B''/PR72/PR130/PR59 and R5/B'/B56 families). Interacts with SIC/RON3. In terms of tissue distribution, expressed ubiquitously.

Its function is as follows. The B regulatory subunit may modulate substrate selectivity and catalytic activity, and may also direct the localization of the catalytic enzyme to a particular subcellular compartment. This is Serine/threonine protein phosphatase 2A 55 kDa regulatory subunit B beta isoform (PP2AB2) from Arabidopsis thaliana (Mouse-ear cress).